The primary structure comprises 103 residues: Interleukin-8 (103 aa).

Residues 1-25 form the signal peptide; the sequence is MTSKLAVAFLAVFLLSAALCEAAVL. The residue at position 27 (arginine 27) is a Citrulline. 2 disulfide bridges follow: cysteine 34–cysteine 61 and cysteine 36–cysteine 77.

This sequence belongs to the intercrine alpha (chemokine CxC) family. Homodimer. Interacts with TNFAIP6 (via Link domain); this interaction interferes with chemokine binding to glycosaminoglycans. Citrullination at Arg-27 prevents proteolysis, and dampens tissue inflammation, it also enhances leukocytosis, possibly through impaired chemokine clearance from the blood circulation. As to expression, alveolar macrophages.

The protein localises to the secreted. Its function is as follows. Chemotactic factor that mediates inflammatory response by attracting neutrophils, basophils, and T-cells to clear pathogens and protect the host from infection. Also plays an important role in neutrophil activation. Released in response to an inflammatory stimulus, exerts its effect by binding to the G-protein-coupled receptors CXCR1 and CXCR2, primarily found in neutrophils, monocytes and endothelial cells. G-protein heterotrimer (alpha, beta, gamma subunits) constitutively binds to CXCR1/CXCR2 receptor and activation by IL8 leads to beta and gamma subunits release from Galpha (GNAI2 in neutrophils) and activation of several downstream signaling pathways including PI3K and MAPK pathways. This is Interleukin-8 (CXCL8) from Sus scrofa (Pig).